The sequence spans 388 residues: 8-amino-7-oxononanoate synthase (388 aa).

Position 20 (R20) interacts with substrate. Residue 107-108 (GY) coordinates pyridoxal 5'-phosphate. Residue H132 participates in substrate binding. The pyridoxal 5'-phosphate site is built by S178, H206, and T237. Residue K240 is modified to N6-(pyridoxal phosphate)lysine. T356 serves as a coordination point for substrate.

It belongs to the class-II pyridoxal-phosphate-dependent aminotransferase family. BioF subfamily. In terms of assembly, homodimer. The cofactor is pyridoxal 5'-phosphate.

It carries out the reaction 6-carboxyhexanoyl-[ACP] + L-alanine + H(+) = (8S)-8-amino-7-oxononanoate + holo-[ACP] + CO2. It functions in the pathway cofactor biosynthesis; biotin biosynthesis. Catalyzes the decarboxylative condensation of pimeloyl-[acyl-carrier protein] and L-alanine to produce 8-amino-7-oxononanoate (AON), [acyl-carrier protein], and carbon dioxide. The polypeptide is 8-amino-7-oxononanoate synthase (Herminiimonas arsenicoxydans).